We begin with the raw amino-acid sequence, 341 residues long: Protein phosphatase methylesterase 1 (341 aa).

The tract at residues 1 to 24 (MAFRKEELSQTLYENESEQSSETK) is disordered. Residues 9-20 (SQTLYENESEQS) are compositionally biased toward polar residues. Residues Ser153, Asp178, and His304 contribute to the active site.

The protein belongs to the AB hydrolase superfamily.

The enzyme catalyses [phosphatase 2A protein]-C-terminal L-leucine methyl ester + H2O = [phosphatase 2A protein]-C-terminal L-leucine + methanol + H(+). Its function is as follows. Demethylates proteins that have been reversibly carboxymethylated. Demethylates the phosphatase PP2A catalytic subunit. The sequence is that of Protein phosphatase methylesterase 1 (ppe1) from Schizosaccharomyces pombe (strain 972 / ATCC 24843) (Fission yeast).